Consider the following 371-residue polypeptide: Glutamate 5-kinase 2 (371 aa).

K13 contributes to the ATP binding site. Residues S53, D140, and N152 each coordinate substrate. ATP contacts are provided by residues 172-173 (SD) and 214-220 (TGGMRSK). Residues 280-356 (EGEMILSDDC…KELTNRALID (77 aa)) enclose the PUA domain.

It belongs to the glutamate 5-kinase family.

It is found in the cytoplasm. The catalysed reaction is L-glutamate + ATP = L-glutamyl 5-phosphate + ADP. Its pathway is amino-acid biosynthesis; L-proline biosynthesis; L-glutamate 5-semialdehyde from L-glutamate: step 1/2. Its function is as follows. Catalyzes the transfer of a phosphate group to glutamate to form L-glutamate 5-phosphate. In Bacillus subtilis (strain 168), this protein is Glutamate 5-kinase 2 (proJ).